The primary structure comprises 592 residues: Arginine--tRNA ligase (592 aa).

Positions 134 to 144 match the 'HIGH' region motif; that stretch reads ANPTGPLHVGH.

The protein belongs to the class-I aminoacyl-tRNA synthetase family. As to quaternary structure, monomer.

The protein localises to the cytoplasm. It catalyses the reaction tRNA(Arg) + L-arginine + ATP = L-arginyl-tRNA(Arg) + AMP + diphosphate. This Coxiella burnetii (strain CbuK_Q154) (Coxiella burnetii (strain Q154)) protein is Arginine--tRNA ligase.